A 262-amino-acid chain; its full sequence is Ribosomal RNA small subunit methyltransferase A (262 aa).

His19, Leu21, Gly44, Glu65, Asp90, and Asn109 together coordinate S-adenosyl-L-methionine. The segment at 218-246 (LPNNLPGPLRERAEEALAGLGHGPDARAE) is disordered.

This sequence belongs to the class I-like SAM-binding methyltransferase superfamily. rRNA adenine N(6)-methyltransferase family. RsmA subfamily.

It localises to the cytoplasm. It carries out the reaction adenosine(1518)/adenosine(1519) in 16S rRNA + 4 S-adenosyl-L-methionine = N(6)-dimethyladenosine(1518)/N(6)-dimethyladenosine(1519) in 16S rRNA + 4 S-adenosyl-L-homocysteine + 4 H(+). Functionally, specifically dimethylates two adjacent adenosines (A1518 and A1519) in the loop of a conserved hairpin near the 3'-end of 16S rRNA in the 30S particle. May play a critical role in biogenesis of 30S subunits. In Rubrobacter xylanophilus (strain DSM 9941 / JCM 11954 / NBRC 16129 / PRD-1), this protein is Ribosomal RNA small subunit methyltransferase A.